The following is a 338-amino-acid chain: Nodulation outer protein L (338 aa).

A compositionally biased stretch (polar residues) spans 1–14 (MDINSTSPLNASPQ). Disordered stretches follow at residues 1–48 (MDIN…LPQV), 85–158 (TRER…DLET), 187–209 (SPAPLTAERGRSPQPSEQQPHAR), and 230–259 (PQAGPWQVGPSHSGPSQARPSHAWPSSSAG). Residues 85–97 (TRERSPHPSEQRP) show a composition bias toward basic and acidic residues. Over residues 126–138 (VGPSRSGPSQAGL) the composition is skewed to polar residues. The span at 242 to 258 (SGPSQARPSHAWPSSSA) shows a compositional bias: polar residues.

It localises to the secreted. In terms of biological role, putative symbiotic effector that modulates nodulation in legumes. When delivered into the plant cell, modulates the activity of signal transduction pathways that culminate in activation of PR proteins. The polypeptide is Nodulation outer protein L (nopL) (Sinorhizobium fredii (strain NBRC 101917 / NGR234)).